The chain runs to 444 residues: Protein CLP1 homolog (444 aa).

ATP contacts are provided by residues glutamate 33, lysine 72, and 140 to 145 (DSGKST).

This sequence belongs to the Clp1 family. Clp1 subfamily. In terms of assembly, interacts with PCFS4 and SYM5. Forms a complex with cleavage and polyadenylation specificity factor (CPSF) subunits CPSF30, CPSF100, PCFS1, PCFS4, PCFS5, CPSF160 and FY.

Its subcellular location is the nucleus. In terms of biological role, required for endonucleolytic cleavage during polyadenylation-dependent pre-mRNA 3'-end formation. Functions in gametophyte, embryo and postembryotic development. The chain is Protein CLP1 homolog (CLPS3) from Arabidopsis thaliana (Mouse-ear cress).